Consider the following 888-residue polypeptide: Kinesin-like protein KIF20A (888 aa).

Serine 2 bears the N-acetylserine mark. Phosphoserine is present on residues serine 7, serine 14, and serine 21. The Kinesin motor domain maps to 63 to 506 (KVKVYLRVRP…AKFSAIASQL (444 aa)). Residue 159–166 (GVTNSGKT) coordinates ATP. Serine 527 carries the post-translational modification Phosphoserine; by PLK1. A Phosphoserine modification is found at serine 531. 2 coiled-coil regions span residues 559–587 (KEEL…EVQL) and 630–760 (ESLT…ERAC). Phosphoserine occurs at positions 667, 683, and 823. Residues 761–888 (CHNTGAGKLR…LKSGPFGKKY (128 aa)) form a globular region. The segment at 823 to 863 (STKKRLGANQENQQPNQQPPGKKPFLRNLLPRTPTCQSSTD) is disordered. Threonine 855 carries the phosphothreonine modification. Residues serine 865, serine 876, and serine 881 each carry the phosphoserine modification.

It belongs to the TRAFAC class myosin-kinesin ATPase superfamily. Kinesin family. Phosphorylated by PLK1 at Ser-527 during mitosis, creating a docking site for PLK1 and recruiting PLK1 at central spindle.

Its subcellular location is the golgi apparatus. It is found in the cytoplasm. It localises to the cytoskeleton. The protein localises to the spindle. Functionally, mitotic kinesin required for chromosome passenger complex (CPC)-mediated cytokinesis. Following phosphorylation by PLK1, involved in recruitment of PLK1 to the central spindle. Interacts with guanosine triphosphate (GTP)-bound forms of RAB6A and RAB6B. May act as a motor required for the retrograde RAB6 regulated transport of Golgi membranes and associated vesicles along microtubules. Has a microtubule plus end-directed motility. The protein is Kinesin-like protein KIF20A (KIF20A) of Bos taurus (Bovine).